Reading from the N-terminus, the 457-residue chain is Cytochrome b-c1 complex subunit 1, mitochondrial (457 aa).

The transit peptide at 1-26 directs the protein to the mitochondrion; the sequence is MLRTVTSKTVSNQFKRSLATAVATPK.

It belongs to the peptidase M16 family. UQCRC1/QCR1 subfamily. As to quaternary structure, component of the ubiquinol-cytochrome c oxidoreductase (cytochrome b-c1 complex, complex III, CIII), a multisubunit enzyme composed of 10 subunits. The complex is composed of 3 respiratory subunits cytochrome b (COB), cytochrome c1 (CYT1) and Rieske protein (RIP1), 2 core protein subunits COR1 and QCR2, and 5 low-molecular weight protein subunits QCR6, QCR7, QCR8, QCR9 and QCR10. The complex exists as an obligatory dimer and forms supercomplexes (SCs) in the inner mitochondrial membrane with a monomer or a dimer of cytochrome c oxidase (complex IV, CIV), resulting in 2 different assemblies (supercomplexes III(2)IV and III(2)IV(2)). COR1 interacts with COX5A at the CIII-CIV interface.

It is found in the mitochondrion inner membrane. Its function is as follows. Component of the ubiquinol-cytochrome c oxidoreductase, a multisubunit transmembrane complex that is part of the mitochondrial electron transport chain which drives oxidative phosphorylation. The respiratory chain contains 3 multisubunit complexes succinate dehydrogenase (complex II, CII), ubiquinol-cytochrome c oxidoreductase (cytochrome b-c1 complex, complex III, CIII) and cytochrome c oxidase (complex IV, CIV), that cooperate to transfer electrons derived from NADH and succinate to molecular oxygen, creating an electrochemical gradient over the inner membrane that drives transmembrane transport and the ATP synthase. The cytochrome b-c1 complex catalyzes electron transfer from ubiquinol to cytochrome c, linking this redox reaction to translocation of protons across the mitochondrial inner membrane, with protons being carried across the membrane as hydrogens on the quinol. In the process called Q cycle, 2 protons are consumed from the matrix, 4 protons are released into the intermembrane space and 2 electrons are passed to cytochrome c. This chain is Cytochrome b-c1 complex subunit 1, mitochondrial (COR1), found in Saccharomyces cerevisiae (strain ATCC 204508 / S288c) (Baker's yeast).